The primary structure comprises 270 residues: Putative carbamate hydrolase RutD (270 aa).

It belongs to the AB hydrolase superfamily. Hydrolase RutD family.

The catalysed reaction is carbamate + 2 H(+) = NH4(+) + CO2. Involved in pyrimidine catabolism. May facilitate the hydrolysis of carbamate, a reaction that can also occur spontaneously. The sequence is that of Putative carbamate hydrolase RutD from Escherichia coli O44:H18 (strain 042 / EAEC).